The chain runs to 495 residues: Lysine--tRNA ligase (495 aa).

Residues Glu-406 and Glu-413 each contribute to the Mg(2+) site.

Belongs to the class-II aminoacyl-tRNA synthetase family. In terms of assembly, homodimer. Mg(2+) is required as a cofactor.

Its subcellular location is the cytoplasm. The catalysed reaction is tRNA(Lys) + L-lysine + ATP = L-lysyl-tRNA(Lys) + AMP + diphosphate. In Staphylococcus saprophyticus subsp. saprophyticus (strain ATCC 15305 / DSM 20229 / NCIMB 8711 / NCTC 7292 / S-41), this protein is Lysine--tRNA ligase.